Consider the following 67-residue polypeptide: Large ribosomal subunit protein bL35 (67 aa).

This sequence belongs to the bacterial ribosomal protein bL35 family.

In Rhizobium etli (strain ATCC 51251 / DSM 11541 / JCM 21823 / NBRC 15573 / CFN 42), this protein is Large ribosomal subunit protein bL35.